The following is a 535-amino-acid chain: Bifunctional purine biosynthesis protein PurH (535 aa).

The MGS-like domain maps to 6-151 (TRLPVRRALI…KNHKDVAIVV (146 aa)).

It belongs to the PurH family.

It catalyses the reaction (6R)-10-formyltetrahydrofolate + 5-amino-1-(5-phospho-beta-D-ribosyl)imidazole-4-carboxamide = 5-formamido-1-(5-phospho-D-ribosyl)imidazole-4-carboxamide + (6S)-5,6,7,8-tetrahydrofolate. The catalysed reaction is IMP + H2O = 5-formamido-1-(5-phospho-D-ribosyl)imidazole-4-carboxamide. It participates in purine metabolism; IMP biosynthesis via de novo pathway; 5-formamido-1-(5-phospho-D-ribosyl)imidazole-4-carboxamide from 5-amino-1-(5-phospho-D-ribosyl)imidazole-4-carboxamide (10-formyl THF route): step 1/1. Its pathway is purine metabolism; IMP biosynthesis via de novo pathway; IMP from 5-formamido-1-(5-phospho-D-ribosyl)imidazole-4-carboxamide: step 1/1. The sequence is that of Bifunctional purine biosynthesis protein PurH from Azotobacter vinelandii (strain DJ / ATCC BAA-1303).